The primary structure comprises 288 residues: MKSFCVKAPAKINLFLHVVDKKETGYHLIEGLFVFANLSNFLEIKVGEKDSRYDNSTVEFINSESKINNQYNTVMKAVNLLLRHAPVRTKVTVKVVKNIPIAAGLGSGSSDAGAVVRTLGKLWEIDRTILNEIALNVGADVPASVDSKPVFVRGIGEELCHIKKFSLPTNVVLVKPKKRFLSTPEVFSKHEGKFSEPIKWSDDAEKDLLKLLKETRNDLQEIAISFVPEIKDVISTLESQEGSILSRMSGSGVSCFGIFDSEENAKAAAVNIGKKQPEWWVCDTQLIV.

Residue lysine 11 is part of the active site. ATP is bound at residue 100 to 110; sequence PIAAGLGSGSS. The active site involves aspartate 140.

Belongs to the GHMP kinase family. IspE subfamily.

The catalysed reaction is 4-CDP-2-C-methyl-D-erythritol + ATP = 4-CDP-2-C-methyl-D-erythritol 2-phosphate + ADP + H(+). Its pathway is isoprenoid biosynthesis; isopentenyl diphosphate biosynthesis via DXP pathway; isopentenyl diphosphate from 1-deoxy-D-xylulose 5-phosphate: step 3/6. Functionally, catalyzes the phosphorylation of the position 2 hydroxy group of 4-diphosphocytidyl-2C-methyl-D-erythritol. The polypeptide is 4-diphosphocytidyl-2-C-methyl-D-erythritol kinase (Wolbachia sp. subsp. Drosophila simulans (strain wRi)).